The following is a 392-amino-acid chain: Heat-inducible transcription repressor HrcA (392 aa).

Belongs to the HrcA family.

Its function is as follows. Negative regulator of class I heat shock genes (grpE-dnaK-dnaJ and groELS operons). Prevents heat-shock induction of these operons. The protein is Heat-inducible transcription repressor HrcA of Synechococcus sp. (strain JA-3-3Ab) (Cyanobacteria bacterium Yellowstone A-Prime).